We begin with the raw amino-acid sequence, 653 residues long: tRNA 5-methylaminomethyl-2-thiouridine biosynthesis bifunctional protein MnmC (653 aa).

The tRNA (mnm(5)s(2)U34)-methyltransferase stretch occupies residues 1 to 233 (MKTAPITPGR…KRDITVARFT (233 aa)). Positions 258–653 (IGAGLAGCAA…YALPRWRSDS (396 aa)) are FAD-dependent cmnm(5)s(2)U34 oxidoreductase.

In the N-terminal section; belongs to the methyltransferase superfamily. tRNA (mnm(5)s(2)U34)-methyltransferase family. It in the C-terminal section; belongs to the DAO family. The cofactor is FAD.

Its subcellular location is the cytoplasm. It carries out the reaction 5-aminomethyl-2-thiouridine(34) in tRNA + S-adenosyl-L-methionine = 5-methylaminomethyl-2-thiouridine(34) in tRNA + S-adenosyl-L-homocysteine + H(+). Catalyzes the last two steps in the biosynthesis of 5-methylaminomethyl-2-thiouridine (mnm(5)s(2)U) at the wobble position (U34) in tRNA. Catalyzes the FAD-dependent demodification of cmnm(5)s(2)U34 to nm(5)s(2)U34, followed by the transfer of a methyl group from S-adenosyl-L-methionine to nm(5)s(2)U34, to form mnm(5)s(2)U34. In Methylibium petroleiphilum (strain ATCC BAA-1232 / LMG 22953 / PM1), this protein is tRNA 5-methylaminomethyl-2-thiouridine biosynthesis bifunctional protein MnmC.